Reading from the N-terminus, the 382-residue chain is Kelch domain-containing protein 3 (382 aa).

5 Kelch repeats span residues 25–77, 88–138, 139–189, 191–249, and 251–301; these read RVYS…PYMR, TVFL…VLGK, IMYI…TMLG, HMYV…GYNG, and LYIF…IVGD.

Component of a CRL2(KLHDC3) complex, also named ECS(KLHDC3) complex, composed of CUL2, Elongin BC (ELOB and ELOC), RBX1 and substrate-specific adapter KLHDC3. May form oligomers as a KLHDC3-ELOB-ELOC complex; this interaction is likely autoinhibitory for the E3 ligase complex.

It localises to the cytoplasm. The protein operates within protein modification; protein ubiquitination. Its function is as follows. Substrate-recognition component of a Cul2-RING (CRL2) E3 ubiquitin-protein ligase complex of the DesCEND (destruction via C-end degrons) pathway, which recognizes a C-degron located at the extreme C terminus of target proteins, leading to their ubiquitination and degradation. The C-degron recognized by the DesCEND pathway is usually a motif of less than ten residues and can be present in full-length proteins, truncated proteins or proteolytically cleaved forms. The CRL2(KLHDC3) complex specifically recognizes proteins with a glycine (Gly) at the C-terminus, leading to their ubiquitination and degradation: recognizes the C-terminal -Arg-(Xaa)n-Arg-Gly, -Arg-(Xaa)n-Lys-Gly, and -Arg-(Xaa)n-Gln-Gly degrons. The CRL2(KLHDC3) complex mediates ubiquitination and degradation of truncated SELENOV and SEPHS2 selenoproteins produced by failed UGA/Sec decoding, which end with a glycine. May be involved in meiotic recombination process. This is Kelch domain-containing protein 3 from Rattus norvegicus (Rat).